Here is a 201-residue protein sequence, read N- to C-terminus: NADH-quinone oxidoreductase subunit C (201 aa).

It belongs to the complex I 30 kDa subunit family. NDH-1 is composed of 14 different subunits. Subunits NuoB, C, D, E, F, and G constitute the peripheral sector of the complex.

It is found in the cell inner membrane. The catalysed reaction is a quinone + NADH + 5 H(+)(in) = a quinol + NAD(+) + 4 H(+)(out). Functionally, NDH-1 shuttles electrons from NADH, via FMN and iron-sulfur (Fe-S) centers, to quinones in the respiratory chain. The immediate electron acceptor for the enzyme in this species is believed to be ubiquinone. Couples the redox reaction to proton translocation (for every two electrons transferred, four hydrogen ions are translocated across the cytoplasmic membrane), and thus conserves the redox energy in a proton gradient. The chain is NADH-quinone oxidoreductase subunit C from Sinorhizobium medicae (strain WSM419) (Ensifer medicae).